The primary structure comprises 552 residues: Chaperonin GroEL (552 aa).

Residues 30-33 (TLGP), lysine 51, 87-91 (DGTTT), glycine 415, and aspartate 499 contribute to the ATP site.

This sequence belongs to the chaperonin (HSP60) family. As to quaternary structure, forms a cylinder of 14 subunits composed of two heptameric rings stacked back-to-back. Interacts with the co-chaperonin GroES.

It localises to the cytoplasm. It catalyses the reaction ATP + H2O + a folded polypeptide = ADP + phosphate + an unfolded polypeptide.. In terms of biological role, together with its co-chaperonin GroES, plays an essential role in assisting protein folding. The GroEL-GroES system forms a nano-cage that allows encapsulation of the non-native substrate proteins and provides a physical environment optimized to promote and accelerate protein folding. This chain is Chaperonin GroEL, found in Hamiltonella defensa subsp. Acyrthosiphon pisum (strain 5AT).